Consider the following 108-residue polypeptide: Putative septation protein SpoVG (108 aa).

Belongs to the SpoVG family.

In terms of biological role, could be involved in septation. The polypeptide is Putative septation protein SpoVG (Bdellovibrio bacteriovorus (strain ATCC 15356 / DSM 50701 / NCIMB 9529 / HD100)).